A 172-amino-acid chain; its full sequence is Translocator protein 2 (172 aa).

Transmembrane regions (helical) follow at residues 3–23 (PQGA…SLLT), 45–65 (VLLA…YLVW), 80–100 (LGLY…FFAA), 104–124 (GLAL…ALIW), and 130–150 (LAAV…SIAY).

Belongs to the TspO/BZRP family. Homotetramer. May also form homodimer. Expressed in erythrocytes (at protein level).

The protein localises to the endoplasmic reticulum membrane. Its subcellular location is the cell membrane. Cholesterol-binding protein involved in the redistribution of cholesterol from lipid droplets to the endoplasmic reticulum. Required to meet cholesterol demands during erythropoietic differentiation. May play a role in transport processes at the plasma membrane of erythrocytes, including regulating VDAC-mediated ATP export, and import of the heme precursors protoporphyrin IX and 5-aminolevulinic acid. The sequence is that of Translocator protein 2 from Canis lupus familiaris (Dog).